A 240-amino-acid polypeptide reads, in one-letter code: 14-3-3 protein 3 (240 aa).

Belongs to the 14-3-3 family. In terms of assembly, interacts with coactosin. Interacts with ACTO/actophorin.

The protein resides in the cytoplasm. Its subcellular location is the cell projection. It is found in the phagocytic cup. Adapter protein which is required for phagocytosis and motility, probably by regulating actin cytoskeleton dynamics. During phagocytosis, plays a role in the initiation and/or formation of the phagocytic cup and is involved in the recruitment of the actin binding protein coactosin to the phagocytic cup. The sequence is that of 14-3-3 protein 3 from Entamoeba histolytica (strain ATCC 30459 / HM-1:IMSS / ABRM).